We begin with the raw amino-acid sequence, 144 residues long: Deoxyuridine 5'-triphosphate nucleotidohydrolase (144 aa).

Substrate contacts are provided by residues 63–65 (RSG), Asn-76, and 80–82 (TID).

Belongs to the dUTPase family. Mg(2+) is required as a cofactor.

The enzyme catalyses dUTP + H2O = dUMP + diphosphate + H(+). It functions in the pathway pyrimidine metabolism; dUMP biosynthesis; dUMP from dCTP (dUTP route): step 2/2. Functionally, this enzyme is involved in nucleotide metabolism: it produces dUMP, the immediate precursor of thymidine nucleotides and it decreases the intracellular concentration of dUTP so that uracil cannot be incorporated into DNA. The sequence is that of Deoxyuridine 5'-triphosphate nucleotidohydrolase from Porphyromonas gingivalis (strain ATCC 33277 / DSM 20709 / CIP 103683 / JCM 12257 / NCTC 11834 / 2561).